The following is a 204-amino-acid chain: Protein G1-like5 (204 aa).

Disordered stretches follow at residues 1-45 (MEFV…ESQK) and 157-204 (RARG…GAAA). Over residues 26–39 (TGATSASAAGASPS) the composition is skewed to low complexity. The region spanning 40-167 (RYESQKRRDW…ARGVSYEKKK (128 aa)) is the ALOG domain. The Nuclear localization signal signature appears at 165–169 (KKKRK).

This sequence belongs to the plant homeotic and developmental regulators ALOG protein family.

The protein resides in the nucleus. Its function is as follows. Probable transcription regulator that acts as a developmental regulator by promoting cell growth in response to light. The polypeptide is Protein G1-like5 (G1L5) (Oryza sativa subsp. japonica (Rice)).